Reading from the N-terminus, the 87-residue chain is UPF0367 protein P9303_26451 (87 aa).

Belongs to the UPF0367 family.

This is UPF0367 protein P9303_26451 from Prochlorococcus marinus (strain MIT 9303).